The chain runs to 367 residues: Cobalt-precorrin-5B C(1)-methyltransferase (367 aa).

It belongs to the CbiD family.

It catalyses the reaction Co-precorrin-5B + S-adenosyl-L-methionine = Co-precorrin-6A + S-adenosyl-L-homocysteine. Its pathway is cofactor biosynthesis; adenosylcobalamin biosynthesis; cob(II)yrinate a,c-diamide from sirohydrochlorin (anaerobic route): step 6/10. Its function is as follows. Catalyzes the methylation of C-1 in cobalt-precorrin-5B to form cobalt-precorrin-6A. In Thermosynechococcus vestitus (strain NIES-2133 / IAM M-273 / BP-1), this protein is Cobalt-precorrin-5B C(1)-methyltransferase.